We begin with the raw amino-acid sequence, 895 residues long: Serine-rich coiled-coil domain-containing protein 1 (895 aa).

Disordered stretches follow at residues 1 to 142, 154 to 177, 332 to 394, and 459 to 497; these read MGDS…KEPS, SGRSEGDDSGFTEEQSRRSIKQST, ELHS…RTLG, and RSSSEGTAGSSRMVLKPKDGHVEASSLRKHRTGSSSSKM. Over residues 43-56 the composition is skewed to low complexity; the sequence is SSSPSSTNSSSGST. Residues 83–102 are compositionally biased toward polar residues; that stretch reads TEQNLSISNGAQPSHSNMQK. Residues 131 to 142 show a composition bias toward basic and acidic residues; it reads LTEDFEREKEPS. A compositionally biased stretch (polar residues) spans 348–358; that stretch reads SLQSTELSVGN. A coiled-coil region spans residues 675 to 705; that stretch reads MLRLQLKDRDELISQLQAELEKVQHLQKAFA. The segment at 731–753 is disordered; that stretch reads QGGRETTHRNRTMSQSHSTRDRK.

This sequence belongs to the CCSER family.

The sequence is that of Serine-rich coiled-coil domain-containing protein 1 (Ccser1) from Mus musculus (Mouse).